The primary structure comprises 85 residues: U4-theraphotoxin-Hhn1a (85 aa).

The signal sequence occupies residues 1–22 (MKVTLIAILTCAAALVLHTTAA). Positions 23–48 (EELEAESQLMEVGMPDTELAAVDEER) are excised as a propeptide. Intrachain disulfides connect C52-C66, C56-C77, and C71-C82.

The protein belongs to the neurotoxin 12 (Hwtx-2) family. 02 (Hwtx-2) subfamily. As to quaternary structure, monomer. As to expression, expressed by the venom gland.

The protein resides in the secreted. Its function is as follows. Neurotoxin active on both insects and mammals. The sequence is that of U4-theraphotoxin-Hhn1a from Cyriopagopus hainanus (Chinese bird spider).